The sequence spans 295 residues: 33 kDa chaperonin (295 aa).

2 disulfide bridges follow: Cys-237/Cys-239 and Cys-270/Cys-273.

This sequence belongs to the HSP33 family. Under oxidizing conditions two disulfide bonds are formed involving the reactive cysteines. Under reducing conditions zinc is bound to the reactive cysteines and the protein is inactive.

It localises to the cytoplasm. Its function is as follows. Redox regulated molecular chaperone. Protects both thermally unfolding and oxidatively damaged proteins from irreversible aggregation. Plays an important role in the bacterial defense system toward oxidative stress. The sequence is that of 33 kDa chaperonin from Shouchella clausii (strain KSM-K16) (Alkalihalobacillus clausii).